A 328-amino-acid chain; its full sequence is dTDP-glucose 4,6-dehydratase (328 aa).

NAD(+)-binding positions include 13-14, 37-40, 63-64, 82-86, and threonine 101; these read FI, DALT, DI, and LAAES. Substrate is bound at residue serine 86. Threonine 126 lines the substrate pocket. Aspartate 127 serves as the catalytic Proton donor. Catalysis depends on proton acceptor residues glutamate 128 and tyrosine 150. 150–154 is an NAD(+) binding site; it reads YSASK. Substrate is bound at residue asparagine 179. Asparagine 180 is an NAD(+) binding site. Substrate is bound by residues 189-190, 205-207, arginine 214, asparagine 249, and 272-276; these read KL, PLY, and DRKGH.

Belongs to the NAD(P)-dependent epimerase/dehydratase family. dTDP-glucose dehydratase subfamily. In terms of assembly, homodimer. NAD(+) serves as cofactor.

The catalysed reaction is dTDP-alpha-D-glucose = dTDP-4-dehydro-6-deoxy-alpha-D-glucose + H2O. It participates in antibiotic biosynthesis; streptomycin biosynthesis. Involved in the biosynthesis of the streptose moiety of streptomycin. Catalyzes the dehydration of dTDP-D-glucose to form dTDP-6-deoxy-D-xylo-4-hexulose via a three-step process involving oxidation, dehydration and reduction. The sequence is that of dTDP-glucose 4,6-dehydratase from Streptomyces griseus.